Here is a 340-residue protein sequence, read N- to C-terminus: Anthranilate phosphoribosyltransferase (340 aa).

5-phospho-alpha-D-ribose 1-diphosphate-binding positions include glycine 81, 84-85 (GD), threonine 89, 91-94 (NIST), 109-117 (KHGNRNLSS), and alanine 121. An anthranilate-binding site is contributed by glycine 81. Serine 93 provides a ligand contact to Mg(2+). Asparagine 112 provides a ligand contact to anthranilate. Residue arginine 167 participates in anthranilate binding. 2 residues coordinate Mg(2+): aspartate 226 and glutamate 227.

It belongs to the anthranilate phosphoribosyltransferase family. In terms of assembly, homodimer. Mg(2+) is required as a cofactor.

The enzyme catalyses N-(5-phospho-beta-D-ribosyl)anthranilate + diphosphate = 5-phospho-alpha-D-ribose 1-diphosphate + anthranilate. The protein operates within amino-acid biosynthesis; L-tryptophan biosynthesis; L-tryptophan from chorismate: step 2/5. In terms of biological role, catalyzes the transfer of the phosphoribosyl group of 5-phosphorylribose-1-pyrophosphate (PRPP) to anthranilate to yield N-(5'-phosphoribosyl)-anthranilate (PRA). The chain is Anthranilate phosphoribosyltransferase from Ruegeria sp. (strain TM1040) (Silicibacter sp.).